The primary structure comprises 298 residues: Cyclin-D4-2 (298 aa).

Belongs to the cyclin family. Cyclin D subfamily. As to quaternary structure, interacts with CDKA-1 to form a kinase complex.

May promote cell division. This is Cyclin-D4-2 (CYCD4-2) from Arabidopsis thaliana (Mouse-ear cress).